The primary structure comprises 101 residues: Stefin-C (101 aa).

Methionine 1 bears the N-acetylmethionine mark. The Secondary area of contact signature appears at 49 to 53 (QVVAG).

The protein belongs to the cystatin family.

It is found in the cytoplasm. In terms of biological role, strong inhibitor of papain and cathepsin L but poor inhibitor of cathepsin B. The sequence is that of Stefin-C from Bos taurus (Bovine).